The chain runs to 195 residues: CASP-like protein Os03g0196400 (195 aa).

The Cytoplasmic portion of the chain corresponds to 1–38 (MRQQQAGGVGDGVSPGNVPVCYYGPGGRVPSSLERRAR). A helical transmembrane segment spans residues 39-59 (AAEVLLRCAACGLAVLAAALL). Residues 60–81 (GADRQTRVFFSIQKVARYTDMQ) lie on the Extracellular side of the membrane. The chain crosses the membrane as a helical span at residues 82–102 (SLVLLVIANGMAACYSLIQCA). Over 103–104 (RC) the chain is Cytoplasmic. A helical membrane pass occupies residues 105 to 125 (LVMAYIVISAVAAAMEAALIG). Residues 126 to 150 (KYGQPEFQWMKTCHLYKRFCAQAGG) are Extracellular-facing. The helical transmembrane segment at 151 to 171 (GVACAIAASVNMVGVALISAF) threads the bilayer. Over 172-195 (NLFRLYGNSNGGGKATTTTMAGGK) the chain is Cytoplasmic.

Belongs to the Casparian strip membrane proteins (CASP) family. In terms of assembly, homodimer and heterodimers.

It localises to the cell membrane. The sequence is that of CASP-like protein Os03g0196400 from Oryza sativa subsp. japonica (Rice).